The sequence spans 369 residues: tRNA/tmRNA (uracil-C(5))-methyltransferase (369 aa).

5 residues coordinate S-adenosyl-L-methionine: glutamine 193, tyrosine 221, asparagine 226, glutamate 242, and aspartate 302. Catalysis depends on cysteine 327, which acts as the Nucleophile. Residue glutamate 361 is the Proton acceptor of the active site.

It belongs to the class I-like SAM-binding methyltransferase superfamily. RNA M5U methyltransferase family. TrmA subfamily.

It carries out the reaction uridine(54) in tRNA + S-adenosyl-L-methionine = 5-methyluridine(54) in tRNA + S-adenosyl-L-homocysteine + H(+). The enzyme catalyses uridine(341) in tmRNA + S-adenosyl-L-methionine = 5-methyluridine(341) in tmRNA + S-adenosyl-L-homocysteine + H(+). In terms of biological role, dual-specificity methyltransferase that catalyzes the formation of 5-methyluridine at position 54 (m5U54) in all tRNAs, and that of position 341 (m5U341) in tmRNA (transfer-mRNA). The sequence is that of tRNA/tmRNA (uracil-C(5))-methyltransferase from Sulfurimonas denitrificans (strain ATCC 33889 / DSM 1251) (Thiomicrospira denitrificans (strain ATCC 33889 / DSM 1251)).